Here is a 533-residue protein sequence, read N- to C-terminus: CEP295 N-terminal-like protein (533 aa).

Disordered stretches follow at residues 1–40 (MQRD…TTLQ), 84–176 (RSMG…RVTR), 286–333 (LKAD…ETTE), and 370–399 (AGTS…LEDE). A coiled-coil region spans residues 40 to 72 (QQWKARQLQRLAEELKAEWQEARLQQVRQAERL). The segment covering 107–126 (KERNRAAFREERGRREEHPR) has biased composition (basic and acidic residues). Residues 416-531 (MALRQKQKAE…ARKRLQEFQK (116 aa)) adopt a coiled-coil conformation.

Expressed in mature spermatozoa (at protein level). Detected in retina, lung and kidney. In brain, highly expressed in brain-stem, cerebral cortex and thalamus with lesser expression in cerebellum and hippocampus.

The protein localises to the cell projection. It is found in the cilium. The chain is CEP295 N-terminal-like protein from Mus musculus (Mouse).